The primary structure comprises 506 residues: MNIITLTPGQLSLSQLHDIWRHPVQICLDASAIDSINASVACVNDIVAEGRTAYGINTGFGLLAQTRIADEDLQNLQRSLVLSHAAGVGDPLDDAMVRLIMVLKINSLARGFSGIRLSVIEALIALVNAGVYPLIPAKGSVGASGDLAPLAHLSLTLLGEGKARWQGEWLPAQTALKKAGLEPVALAAKEGLALLNGTQASTAFALRGLFEAQELFASAVVCGALTTEAVLGSRRPFDARIHAARGQQGQIDAARLFRHLLTETSAIAESHHHCNKVQDPYSLRCQPQVMGACLTQLRQTKEVLLVEANAVSDNPLVFADAGEVISGGNFHAEPVAMAADNLALAIAEIGALSERRIALMMDKHMSQLPPFLVKNGGVNSGFMIAQVTAAALASENKALAHPHSVDSLPTSANQEDHVSMAPAAGRRLWEMAANTRGVIAVEWLAACQGIDLREGLTSSPLLEQARQALREQVAHYTQDRFFAPDIACATALLAQGALQRLVPDFM.

The 5-imidazolinone (Ala-Gly) cross-link spans 143-145; it reads ASG. 2,3-didehydroalanine (Ser) is present on S144.

The protein belongs to the PAL/histidase family. Contains an active site 4-methylidene-imidazol-5-one (MIO), which is formed autocatalytically by cyclization and dehydration of residues Ala-Ser-Gly.

The protein localises to the cytoplasm. The enzyme catalyses L-histidine = trans-urocanate + NH4(+). Its pathway is amino-acid degradation; L-histidine degradation into L-glutamate; N-formimidoyl-L-glutamate from L-histidine: step 1/3. This Salmonella arizonae (strain ATCC BAA-731 / CDC346-86 / RSK2980) protein is Histidine ammonia-lyase.